We begin with the raw amino-acid sequence, 681 residues long: UvrABC system protein C (681 aa).

The disordered stretch occupies residues 1-23; sequence MNGKKLPDGGILFDETDDEDDDA. Residues 14-23 are compositionally biased toward acidic residues; the sequence is DETDDEDDDA. The GIY-YIG domain maps to 67–145; the sequence is NSPGVYRMFN…IKRLRPRFNV (79 aa). Positions 255-290 constitute a UVR domain; the sequence is QAVKTAIARQMNEASEDLDFERAAIYRDRLAALSHV.

This sequence belongs to the UvrC family. Interacts with UvrB in an incision complex.

It localises to the cytoplasm. Functionally, the UvrABC repair system catalyzes the recognition and processing of DNA lesions. UvrC both incises the 5' and 3' sides of the lesion. The N-terminal half is responsible for the 3' incision and the C-terminal half is responsible for the 5' incision. This is UvrABC system protein C from Agrobacterium fabrum (strain C58 / ATCC 33970) (Agrobacterium tumefaciens (strain C58)).